We begin with the raw amino-acid sequence, 68 residues long: Negative regulatory protein YxlD (68 aa).

A run of 2 helical transmembrane segments spans residues 5 to 25 (EIII…FLFI) and 37 to 57 (WGIV…FFVI).

It localises to the cell membrane. Its function is as follows. Together with YxlE, is important for negative regulation of sigma Y activity, being the major negative regulator. This chain is Negative regulatory protein YxlD (yxlD), found in Bacillus subtilis (strain 168).